A 430-amino-acid polypeptide reads, in one-letter code: Serine--tRNA ligase (430 aa).

Threonine 237–glutamate 239 is a binding site for L-serine. Arginine 268–glutamate 270 is a binding site for ATP. L-serine is bound at residue glutamate 291. Glutamate 355–serine 358 lines the ATP pocket. Serine 391 provides a ligand contact to L-serine.

It belongs to the class-II aminoacyl-tRNA synthetase family. Type-1 seryl-tRNA synthetase subfamily. In terms of assembly, homodimer. The tRNA molecule binds across the dimer.

Its subcellular location is the cytoplasm. The enzyme catalyses tRNA(Ser) + L-serine + ATP = L-seryl-tRNA(Ser) + AMP + diphosphate + H(+). It catalyses the reaction tRNA(Sec) + L-serine + ATP = L-seryl-tRNA(Sec) + AMP + diphosphate + H(+). It functions in the pathway aminoacyl-tRNA biosynthesis; selenocysteinyl-tRNA(Sec) biosynthesis; L-seryl-tRNA(Sec) from L-serine and tRNA(Sec): step 1/1. Functionally, catalyzes the attachment of serine to tRNA(Ser). Is also able to aminoacylate tRNA(Sec) with serine, to form the misacylated tRNA L-seryl-tRNA(Sec), which will be further converted into selenocysteinyl-tRNA(Sec). The chain is Serine--tRNA ligase from Yersinia pseudotuberculosis serotype O:1b (strain IP 31758).